Reading from the N-terminus, the 86-residue chain is Large ribosomal subunit protein bL31B (86 aa).

It belongs to the bacterial ribosomal protein bL31 family. Type B subfamily. In terms of assembly, part of the 50S ribosomal subunit.

The chain is Large ribosomal subunit protein bL31B from Burkholderia lata (strain ATCC 17760 / DSM 23089 / LMG 22485 / NCIMB 9086 / R18194 / 383).